Reading from the N-terminus, the 273-residue chain is Secretory carrier-associated membrane protein 6 (273 aa).

The segment at 1–69 (MHHDPNPFDE…MGDSKSKARE (69 aa)) is disordered. Residues 1–131 (MHHDPNPFDE…LQKLQYLAFA (131 aa)) lie on the Cytoplasmic side of the membrane. A compositionally biased stretch (gly residues) spans 20-30 (NGGGGGGGGGS). The stretch at 68-94 (RELSSWETDLKRREADIKRREEALRNA) forms a coiled coil. A run of 4 helical transmembrane segments spans residues 132-152 (SWLG…VCWI), 159-179 (LFFL…LIWY), 194-214 (FGWF…AAIA), and 239-259 (IIGI…LLSI). The Cytoplasmic portion of the chain corresponds to 260–273 (GVLQRVYMYFRGNK).

Belongs to the SCAMP family.

The protein resides in the cell membrane. It localises to the cytoplasmic vesicle. The protein localises to the secretory vesicle membrane. In terms of biological role, probably involved in membrane trafficking. The protein is Secretory carrier-associated membrane protein 6 (SCAMP6) of Oryza sativa subsp. japonica (Rice).